Here is a 117-residue protein sequence, read N- to C-terminus: Appetite-regulating hormone (117 aa).

The N-terminal stretch at 1-23 (MPSPGTVCSLLLLGMLWLDLAMA) is a signal peptide. A lipid anchor (O-decanoyl serine; alternate) is attached at serine 26. Serine 26 is lipidated: O-hexanoyl serine; alternate. Serine 26 carries the O-octanoyl serine; alternate lipid modification. Residues 29–50 (SPEHQRVQQRKESKKPPAKLQP) are disordered. The segment covering 31–43 (EHQRVQQRKESKK) has biased composition (basic and acidic residues). Residues 52–75 (ALAGWLRPEDGGQAEGAEDELEVR) constitute a propeptide, removed in mature form. Leucine 98 is modified (leucine amide). Residues 99–117 (GKFLQDILWEEAKEAPADK) constitute a propeptide, removed in mature form.

Belongs to the motilin family. O-octanoylated by GOAT/MBOAT4. O-octanoylation or O-decanoylation is essential for ghrelin activity. The O-decanoylated forms Ghrelin-27-C10 and Ghrelin-28-C10 differ in the length of the carbon backbone of the carboxylic acid bound to Ser-26. A small fraction of ghrelin, ghrelin-28-C10:1, may be modified with a singly unsaturated carboxylic acid. Also O-acetylated and O-butyrylated on Ser-26 to minor levels. Post-translationally, amidation of Leu-98 is essential for obestatin activity. Highest level in stomach. All forms are found in serum as well. Other tissues compensate for the loss of ghrelin synthesis in the stomach following gastrectomy.

The protein localises to the secreted. Functionally, ghrelin is the ligand for growth hormone secretagogue receptor type 1 (GHSR). Induces the release of growth hormone from the pituitary. Has an appetite-stimulating effect, induces adiposity and stimulates gastric acid secretion. Involved in growth regulation. Its function is as follows. May be the ligand for GPR39. May have an appetite-reducing effect resulting in decreased food intake. May reduce gastric emptying activity and jejunal motility. The sequence is that of Appetite-regulating hormone (GHRL) from Homo sapiens (Human).